The following is a 1334-amino-acid chain: Rho1 guanine nucleotide exchange factor 1 (1334 aa).

4 disordered regions span residues 1-89, 135-182, 203-245, and 381-402; these read MDYR…ASPV, PQVS…SDSV, LDQN…TSGT, and SLIN…ASSP. The segment covering 138–149 has biased composition (low complexity); the sequence is SNHAPNNSNSPS. The span at 150 to 164 shows a compositional bias: polar residues; sequence LTWHTSSGDDSNQNP. Positions 170–180 are enriched in low complexity; the sequence is QSQSSTSPVSD. Composition is skewed to polar residues over residues 213-227, 234-245, and 381-400; these read VRSS…NSRL, HTVGSHSFTSGT, and SLIN…SEAS. S381 is modified (phosphoserine). The DH domain occupies 621–808; the sequence is KRQEVICEVI…RGFLSRLNVE (188 aa). Residues 843–973 enclose the PH domain; it reads QLIFKGPLKK…WLEHIDNQQT (131 aa). In terms of domain architecture, CNH spans 995–1293; that stretch reads DNKVNAIGVY…RLLADGRGKL (299 aa).

Its subcellular location is the cytoplasm. Functionally, stimulates the exchange of Rho1 and Rho5 GDP-bound form into GTP-bound form. Controls septum formation, cell wall synthesis and localization of F-actin patches. Coordinates actin deposition with cell wall biosynthesis during bipolar growth. The chain is Rho1 guanine nucleotide exchange factor 1 (rgf1) from Schizosaccharomyces pombe (strain 972 / ATCC 24843) (Fission yeast).